We begin with the raw amino-acid sequence, 367 residues long: Uroporphyrinogen decarboxylase (367 aa).

Met-1 carries the N-acetylmethionine modification. Residues Arg-37, Ala-39, Arg-41, Arg-50, Asp-86, Tyr-164, Ser-219, and His-339 each coordinate coproporphyrinogen I. The coproporphyrinogen III site is built by Arg-37, Ala-39, and Arg-41. Coproporphyrinogen III-binding residues include Asp-86, Tyr-164, Ser-219, and His-339.

This sequence belongs to the uroporphyrinogen decarboxylase family. Homodimer.

The protein localises to the cytoplasm. The protein resides in the cytosol. The catalysed reaction is uroporphyrinogen III + 4 H(+) = coproporphyrinogen III + 4 CO2. It carries out the reaction uroporphyrinogen I + 4 H(+) = coproporphyrinogen I + 4 CO2. It participates in porphyrin-containing compound metabolism; protoporphyrin-IX biosynthesis; coproporphyrinogen-III from 5-aminolevulinate: step 4/4. In terms of biological role, catalyzes the sequential decarboxylation of the four acetate side chains of uroporphyrinogen to form coproporphyrinogen and participates in the fifth step in the heme biosynthetic pathway. Isomer I or isomer III of uroporphyrinogen may serve as substrate, but only coproporphyrinogen III can ultimately be converted to heme. In vitro also decarboxylates pentacarboxylate porphyrinogen I. The protein is Uroporphyrinogen decarboxylase of Pongo abelii (Sumatran orangutan).